Consider the following 98-residue polypeptide: Large ribosomal subunit protein uL23 (98 aa).

This sequence belongs to the universal ribosomal protein uL23 family. As to quaternary structure, part of the 50S ribosomal subunit. Contacts protein L29, and trigger factor when it is bound to the ribosome.

Its function is as follows. One of the early assembly proteins it binds 23S rRNA. One of the proteins that surrounds the polypeptide exit tunnel on the outside of the ribosome. Forms the main docking site for trigger factor binding to the ribosome. This chain is Large ribosomal subunit protein uL23, found in Ruegeria pomeroyi (strain ATCC 700808 / DSM 15171 / DSS-3) (Silicibacter pomeroyi).